The primary structure comprises 538 residues: Chaperonin GroEL (538 aa).

ATP contacts are provided by residues 29–32 (TIGP), 86–90 (DGTTT), Gly413, 476–478 (NAA), and Asp492.

This sequence belongs to the chaperonin (HSP60) family. Forms a cylinder of 14 subunits composed of two heptameric rings stacked back-to-back. Interacts with the co-chaperonin GroES.

It localises to the cytoplasm. The enzyme catalyses ATP + H2O + a folded polypeptide = ADP + phosphate + an unfolded polypeptide.. Functionally, together with its co-chaperonin GroES, plays an essential role in assisting protein folding. The GroEL-GroES system forms a nano-cage that allows encapsulation of the non-native substrate proteins and provides a physical environment optimized to promote and accelerate protein folding. The chain is Chaperonin GroEL from Staphylococcus aureus (strain USA300).